We begin with the raw amino-acid sequence, 233 residues long: Demethylmenaquinone methyltransferase (233 aa).

Residues T58, D79, and 106–107 (NA) each bind S-adenosyl-L-methionine.

It belongs to the class I-like SAM-binding methyltransferase superfamily. MenG/UbiE family.

The catalysed reaction is a 2-demethylmenaquinol + S-adenosyl-L-methionine = a menaquinol + S-adenosyl-L-homocysteine + H(+). It functions in the pathway quinol/quinone metabolism; menaquinone biosynthesis; menaquinol from 1,4-dihydroxy-2-naphthoate: step 2/2. Methyltransferase required for the conversion of demethylmenaquinol (DMKH2) to menaquinol (MKH2). The sequence is that of Demethylmenaquinone methyltransferase from Bacillus subtilis (strain 168).